We begin with the raw amino-acid sequence, 221 residues long: Small ribosomal subunit protein uS2 (221 aa).

The tract at residues 202–221 is disordered; the sequence is KVKMPQQNQRGRPQRRFQRR.

This sequence belongs to the universal ribosomal protein uS2 family.

The sequence is that of Small ribosomal subunit protein uS2 from Methanococcus vannielii (strain ATCC 35089 / DSM 1224 / JCM 13029 / OCM 148 / SB).